Consider the following 173-residue polypeptide: Shikimate kinase 1 (173 aa).

14 to 19 (GAGKST) contacts ATP. Serine 18 is a Mg(2+) binding site. Substrate is bound by residues aspartate 36, arginine 60, and glycine 82. An ATP-binding site is contributed by arginine 120. A substrate-binding site is contributed by arginine 140.

It belongs to the shikimate kinase family. In terms of assembly, monomer. Mg(2+) serves as cofactor.

It is found in the cytoplasm. The catalysed reaction is shikimate + ATP = 3-phosphoshikimate + ADP + H(+). It functions in the pathway metabolic intermediate biosynthesis; chorismate biosynthesis; chorismate from D-erythrose 4-phosphate and phosphoenolpyruvate: step 5/7. Its function is as follows. Catalyzes the specific phosphorylation of the 3-hydroxyl group of shikimic acid using ATP as a cosubstrate. The polypeptide is Shikimate kinase 1 (Hamiltonella defensa subsp. Acyrthosiphon pisum (strain 5AT)).